A 123-amino-acid polypeptide reads, in one-letter code: Defensin beta 118 (123 aa).

Residues 1 to 19 (MKLLLLALPMLVLLPQVIP) form the signal peptide. 3 disulfides stabilise this stretch: cysteine 27-cysteine 54, cysteine 34-cysteine 48, and cysteine 38-cysteine 55. Positions 65–123 (VPTTSPTPLSDSTPGIIDDILTVRFTTDYFEVSSKKDMIEESEAGRGTETSLPNVHHSS) are excised as a propeptide. The span at 100-110 (KDMIEESEAGR) shows a compositional bias: basic and acidic residues. Residues 100–123 (KDMIEESEAGRGTETSLPNVHHSS) are disordered. Residues 112 to 123 (TETSLPNVHHSS) show a composition bias toward polar residues.

This sequence belongs to the beta-defensin family. The three-dimensional structure formed by the three intramolecular disulfide bridges is indispensable for antimicrobial activity.

It localises to the secreted. Its function is as follows. Host defense peptide that exhibits antimicrobial activity against both Gram-negative bacteria, such as E.coli and S.typhimurium, and Gram-positive bacteria, such as S.aureus and B.subtilis. Inhibits cell adhesion of E.coli on intestinal epithelial enterocytes. Causes rapid permeabilization of both the outer and inner membrane of E.coli, leading to morphological alterations on the bacterial surface. Binds to bacterial lipopolysaccharides (LPS) with high affinity, and may thereby be involved in immunoregulation through LPS neutralization. May contribute to epididymal innate immunity and protect the sperm against attack by microorganisms. The polypeptide is Defensin beta 118 (DEFB118) (Gorilla gorilla gorilla (Western lowland gorilla)).